The chain runs to 455 residues: MLSRSRCVSRAFSRSLSAFQKGNCPLGRRSLPGISLCQGPGYPDSRKIVISNSSVLNVRFFRTTAVCKDDVITVKTPAFAESVTEGDVRWEKAVGDTVAEDEVVCEIETDKTSVQVPSPANGVIEALLVPDGGKVEGGTPLFTLRKTGAAPAKAKPAEAPAAAAPKAEPAVSAVPPPPAASIPTQMPPVPSPPQPLTSKPVSAVKPTAAPPVAEPGAVKGLRAEHREKMNRMRQRIAQRLKEAQNTCAMLTTFNEIDMSNIQDMRARHKEAFLKKHNLKLGFMSAFVKASAFALQEQPVVNAVIDDTTKEVVYRDYIDISVAVATPRGLVVPVIRNVETMNYADIERTISELGEKARKNELAIEDMDGGTFTISNGGVFGSLFGTPIINPPQSAILGMHAIVDRPVAVGGKVEIRPMMYVALTYDHRLIDGREAVTFLRKIKAAVEDPRVLLLDL.

A mitochondrion-targeting transit peptide spans 1 to 68 (MLSRSRCVSR…RFFRTTAVCK (68 aa)). A Lipoyl-binding domain is found at 71–145 (VITVKTPAFA…EGGTPLFTLR (75 aa)). The residue at position 82 (Ser82) is a Phosphoserine. Lys111 is subject to N6-lipoyllysine. The span at 153 to 173 (KAKPAEAPAAAAPKAEPAVSA) shows a compositional bias: low complexity. A disordered region spans residues 153–214 (KAKPAEAPAA…KPTAAPPVAE (62 aa)). Residue Lys155 is modified to N6-acetyllysine. Residues 174–195 (VPPPPAASIPTQMPPVPSPPQP) show a composition bias toward pro residues. The catalytic stretch occupies residues 221–453 (LRAEHREKMN…AVEDPRVLLL (233 aa)). An N6-acetyllysine mark is found at Lys269, Lys274, Lys275, Lys279, and Lys309. Active-site residues include His426 and Asp430.

Belongs to the 2-oxoacid dehydrogenase family. The 2-oxoglutarate dehydrogenase complex is composed of OGDH (2-oxoglutarate dehydrogenase; E1), DLST (dihydrolipoamide succinyltransferase; E2), DLD (dihydrolipoamide dehydrogenase; E3) and the assembly factor KGD4. It contains multiple copies of the three enzymatic components (E1, E2 and E3). In the nucleus, the 2-oxoglutarate dehydrogenase complex associates with KAT2A. Interacts with ABHD11; this interaction maintains the functional lipoylation of the 2-oxoglutarate dehydrogenase complex. (R)-lipoate serves as cofactor.

It is found in the mitochondrion matrix. The protein resides in the nucleus. The enzyme catalyses N(6)-[(R)-dihydrolipoyl]-L-lysyl-[protein] + succinyl-CoA = N(6)-[(R)-S(8)-succinyldihydrolipoyl]-L-lysyl-[protein] + CoA. It participates in amino-acid degradation; L-lysine degradation via saccharopine pathway; glutaryl-CoA from L-lysine: step 6/6. It functions in the pathway carbohydrate metabolism; tricarboxylic acid cycle. Its function is as follows. Dihydrolipoamide succinyltransferase (E2) component of the 2-oxoglutarate dehydrogenase complex. The 2-oxoglutarate dehydrogenase complex catalyzes the overall conversion of 2-oxoglutarate to succinyl-CoA and CO(2). The 2-oxoglutarate dehydrogenase complex is mainly active in the mitochondrion. A fraction of the 2-oxoglutarate dehydrogenase complex also localizes in the nucleus and is required for lysine succinylation of histones: associates with KAT2A on chromatin and provides succinyl-CoA to histone succinyltransferase KAT2A. The chain is Dihydrolipoyllysine-residue succinyltransferase component of 2-oxoglutarate dehydrogenase complex, mitochondrial from Sus scrofa (Pig).